Consider the following 38-residue polypeptide: Cytochrome b6-f complex subunit 5 (38 aa).

Residues 5–25 (LLCGIVLGLIPVTLLGLFVAA) form a helical membrane-spanning segment.

It belongs to the PetG family. As to quaternary structure, the 4 large subunits of the cytochrome b6-f complex are cytochrome b6, subunit IV (17 kDa polypeptide, PetD), cytochrome f and the Rieske protein, while the 4 small subunits are PetG, PetL, PetM and PetN. The complex functions as a dimer.

The protein resides in the cellular thylakoid membrane. Functionally, component of the cytochrome b6-f complex, which mediates electron transfer between photosystem II (PSII) and photosystem I (PSI), cyclic electron flow around PSI, and state transitions. PetG is required for either the stability or assembly of the cytochrome b6-f complex. The polypeptide is Cytochrome b6-f complex subunit 5 (Parasynechococcus marenigrum (strain WH8102)).